The primary structure comprises 453 residues: Pup--protein ligase (453 aa).

Glu-9 serves as a coordination point for Mg(2+). ATP is bound at residue Arg-53. Tyr-55 provides a ligand contact to Mg(2+). The Proton acceptor role is filled by Asp-57. Glu-63 provides a ligand contact to Mg(2+). ATP-binding residues include Thr-66 and Trp-420.

The protein belongs to the Pup ligase/Pup deamidase family. Pup-conjugating enzyme subfamily.

The enzyme catalyses ATP + [prokaryotic ubiquitin-like protein]-L-glutamate + [protein]-L-lysine = ADP + phosphate + N(6)-([prokaryotic ubiquitin-like protein]-gamma-L-glutamyl)-[protein]-L-lysine.. It functions in the pathway protein degradation; proteasomal Pup-dependent pathway. Its pathway is protein modification; protein pupylation. Catalyzes the covalent attachment of the prokaryotic ubiquitin-like protein modifier Pup to the proteasomal substrate proteins, thereby targeting them for proteasomal degradation. This tagging system is termed pupylation. The ligation reaction involves the side-chain carboxylate of the C-terminal glutamate of Pup and the side-chain amino group of a substrate lysine. The polypeptide is Pup--protein ligase (Streptomyces avermitilis (strain ATCC 31267 / DSM 46492 / JCM 5070 / NBRC 14893 / NCIMB 12804 / NRRL 8165 / MA-4680)).